Here is a 199-residue protein sequence, read N- to C-terminus: UPF0056 membrane protein bbp_399 (199 aa).

Transmembrane regions (helical) follow at residues 7–29 (VTIL…SILK), 39–58 (ILIR…LFAG), 71–93 (TVSV…PTYE), 108–130 (FLVP…MLLS), 137–156 (ILYL…VILL), and 176–198 (LMGL…SWFY).

Belongs to the UPF0056 (MarC) family.

It is found in the cell membrane. This is UPF0056 membrane protein bbp_399 from Buchnera aphidicola subsp. Baizongia pistaciae (strain Bp).